Reading from the N-terminus, the 339-residue chain is Ketol-acid reductoisomerase (NADP(+)) (339 aa).

Residues 1–182 (MRVYYDRDAD…GGGRSGVIET (182 aa)) form the KARI N-terminal Rossmann domain. NADP(+) is bound by residues 24–27 (YGSQ), Arg-48, Ser-51, Thr-53, and 83–86 (DELQ). Residue His-108 is part of the active site. Gly-134 contributes to the NADP(+) binding site. The 146-residue stretch at 183–328 (TFKEECETDL…GKLRAMMPWI (146 aa)) folds into the KARI C-terminal knotted domain. 4 residues coordinate Mg(2+): Asp-191, Glu-195, Glu-227, and Glu-231. Ser-252 serves as a coordination point for substrate.

The protein belongs to the ketol-acid reductoisomerase family. It depends on Mg(2+) as a cofactor.

It carries out the reaction (2R)-2,3-dihydroxy-3-methylbutanoate + NADP(+) = (2S)-2-acetolactate + NADPH + H(+). The catalysed reaction is (2R,3R)-2,3-dihydroxy-3-methylpentanoate + NADP(+) = (S)-2-ethyl-2-hydroxy-3-oxobutanoate + NADPH + H(+). It functions in the pathway amino-acid biosynthesis; L-isoleucine biosynthesis; L-isoleucine from 2-oxobutanoate: step 2/4. Its pathway is amino-acid biosynthesis; L-valine biosynthesis; L-valine from pyruvate: step 2/4. Its function is as follows. Involved in the biosynthesis of branched-chain amino acids (BCAA). Catalyzes an alkyl-migration followed by a ketol-acid reduction of (S)-2-acetolactate (S2AL) to yield (R)-2,3-dihydroxy-isovalerate. In the isomerase reaction, S2AL is rearranged via a Mg-dependent methyl migration to produce 3-hydroxy-3-methyl-2-ketobutyrate (HMKB). In the reductase reaction, this 2-ketoacid undergoes a metal-dependent reduction by NADPH to yield (R)-2,3-dihydroxy-isovalerate. This chain is Ketol-acid reductoisomerase (NADP(+)), found in Brucella melitensis biotype 2 (strain ATCC 23457).